Here is a 176-residue protein sequence, read N- to C-terminus: Cytochrome b (176 aa).

A run of 3 helical transmembrane segments spans residues 33-53, 77-98, and 113-133; these read FGSLLGICLALQILTGLFLAM, WILRYLHANGASMFFICLYLHV, and WNIGVTPLFAVMATAFMGYVL. The heme b site is built by histidine 83 and histidine 97.

This sequence belongs to the cytochrome b family. The cytochrome bc1 complex contains 11 subunits: 3 respiratory subunits (MT-CYB, CYC1 and UQCRFS1), 2 core proteins (UQCRC1 and UQCRC2) and 6 low-molecular weight proteins (UQCRH/QCR6, UQCRB/QCR7, UQCRQ/QCR8, UQCR10/QCR9, UQCR11/QCR10 and a cleavage product of UQCRFS1). This cytochrome bc1 complex then forms a dimer. The cofactor is heme b.

The protein localises to the mitochondrion inner membrane. In terms of biological role, component of the ubiquinol-cytochrome c reductase complex (complex III or cytochrome b-c1 complex) that is part of the mitochondrial respiratory chain. The b-c1 complex mediates electron transfer from ubiquinol to cytochrome c. Contributes to the generation of a proton gradient across the mitochondrial membrane that is then used for ATP synthesis. This Myotis leibii (Eastern small-footed myotis) protein is Cytochrome b (MT-CYB).